The sequence spans 126 residues: Large ribosomal subunit protein bL12 (126 aa).

The protein belongs to the bacterial ribosomal protein bL12 family. As to quaternary structure, homodimer. Part of the ribosomal stalk of the 50S ribosomal subunit. Forms a multimeric L10(L12)X complex, where L10 forms an elongated spine to which 2 to 4 L12 dimers bind in a sequential fashion. Binds GTP-bound translation factors.

Forms part of the ribosomal stalk which helps the ribosome interact with GTP-bound translation factors. Is thus essential for accurate translation. The sequence is that of Large ribosomal subunit protein bL12 from Geobacter sp. (strain M21).